Here is a 1601-residue protein sequence, read N- to C-terminus: Ras guanine nucleotide exchange factor glfB (1601 aa).

4 disordered regions span residues 43–140 (PLLA…KEWD), 188–256 (DLLI…TTTT), 310–461 (SPQR…APDS), and 475–630 (LTTT…VKKG). Over residues 45-55 (LAPPAPPPPPT) the composition is skewed to pro residues. A compositionally biased stretch (polar residues) spans 57-69 (QEINIGSGNSTFI). A compositionally biased stretch (low complexity) spans 70 to 126 (SSNNNNSNNNNNNNSNNNNNNNLNNSNNNNNNLNSNNNNNNNNNNNNNNGNNNNNSN). Serine 197 is modified (phosphoserine). Threonine 201 bears the Phosphothreonine mark. Low complexity-rich tracts occupy residues 211–256 (QQQQ…TTTT) and 310–330 (SPQR…GVVV). Positions 331-359 (ADEESDSSEEESDSSEEESDEYTDEESET) are enriched in acidic residues. Positions 384 to 398 (PLTSVNSNDNTSSGT) are enriched in polar residues. Low complexity-rich tracts occupy residues 435 to 458 (TAVA…TTVA), 475 to 493 (LTTT…TQSI), and 500 to 520 (SQQR…AITK). Residues 521 to 533 (PTKDAKDKKDPAK) are compositionally biased toward basic and acidic residues. The segment covering 558–577 (VPTGTSPPVSSSTSISSSTG) has biased composition (low complexity). The segment covering 578 to 596 (IKKDKVKLSKEEKDRIKKE) has biased composition (basic and acidic residues). Positions 649 to 836 (VRLTQLVLSN…LIIDNYVFLF (188 aa)) constitute a Rho-GAP domain. The N-terminal Ras-GEF domain occupies 851-983 (GKMIISEGSI…TINDFLKLPK (133 aa)). The Ras-GEF domain occupies 1021–1255 (SAMEIAEQCT…ADLSLKCEPP (235 aa)). Residues 1262-1601 (YNAPADIVDE…QESVPSTNAE (340 aa)) are N-terminal F-actin-binding domain. The disordered stretch occupies residues 1443 to 1474 (SNVEKEKLSSSQEQQEQQEQKQQEQQQQQQEP). A compositionally biased stretch (low complexity) spans 1465–1474 (QEQQQQQQEP).

Interacts with gpaB and rapA. Interacts directly with F-actin. In terms of processing, simultaneously phosphorylated at Ser-197 and Thr-201 after cAMP stimulation.

The protein localises to the cytoplasm. It localises to the cell cortex. The protein resides in the cytoskeleton. It is found in the cell projection. Its subcellular location is the filopodium. The protein localises to the lamellipodium. Its function is as follows. GpaB-activated, rapA-specific guanine nucleotide exchange factor, involved in the regulation of the balance between Ras and Rap signaling at the leading edge of chemotaxing cells. Spatially localized activation of Rap and Ras induces F-actin polymerization at the leading edge of chemotaxing cells through the Rac, PI3K, and TORC2 pathways. Also acts as a key regulator of actin-driven membrane protrusions during processes such as phagocytosis and cytokinesis, possibly by modulating rapA signaling pathways. This Dictyostelium discoideum (Social amoeba) protein is Ras guanine nucleotide exchange factor glfB.